The sequence spans 466 residues: 3-isopropylmalate dehydratase large subunit (466 aa).

Positions 347, 407, and 410 each coordinate [4Fe-4S] cluster.

The protein belongs to the aconitase/IPM isomerase family. LeuC type 1 subfamily. In terms of assembly, heterodimer of LeuC and LeuD. [4Fe-4S] cluster serves as cofactor.

The catalysed reaction is (2R,3S)-3-isopropylmalate = (2S)-2-isopropylmalate. It functions in the pathway amino-acid biosynthesis; L-leucine biosynthesis; L-leucine from 3-methyl-2-oxobutanoate: step 2/4. Catalyzes the isomerization between 2-isopropylmalate and 3-isopropylmalate, via the formation of 2-isopropylmaleate. This chain is 3-isopropylmalate dehydratase large subunit, found in Blochmanniella floridana.